The following is a 72-amino-acid chain: Large ribosomal subunit protein uL29 (72 aa).

This sequence belongs to the universal ribosomal protein uL29 family.

The protein is Large ribosomal subunit protein uL29 of Prochlorococcus marinus (strain MIT 9312).